The chain runs to 420 residues: Diaminopimelate decarboxylase (420 aa).

At Lys54 the chain carries N6-(pyridoxal phosphate)lysine. Residue His191 participates in substrate binding. Residues Gly227 and 268-271 contribute to the pyridoxal 5'-phosphate site; that span reads EPGR. Residues Arg271, Arg307, and Tyr311 each contribute to the substrate site. Cys342 functions as the Proton donor in the catalytic mechanism. Glu343 and Tyr378 together coordinate substrate. Position 378 (Tyr378) interacts with pyridoxal 5'-phosphate.

The protein belongs to the Orn/Lys/Arg decarboxylase class-II family. LysA subfamily. The cofactor is pyridoxal 5'-phosphate.

It carries out the reaction meso-2,6-diaminopimelate + H(+) = L-lysine + CO2. The protein operates within amino-acid biosynthesis; L-lysine biosynthesis via DAP pathway; L-lysine from DL-2,6-diaminopimelate: step 1/1. Is activated by 2,3-dimercaptopropan-1-ol. Its function is as follows. Specifically catalyzes the decarboxylation of meso-diaminopimelate (meso-DAP) to L-lysine. Is not active against the DD- or LL-isomers of diaminopimelate. This is Diaminopimelate decarboxylase from Escherichia coli (strain K12).